A 158-amino-acid chain; its full sequence is Chromobox protein homolog 7 (158 aa).

The 59-residue stretch at 11-69 (FAVESIRKKRVRKGKVEYLVKWKGWPPKYSTWEPEEHILDPRLVMAYEEKEEKDRASGY) folds into the Chromo domain. The segment at 60–124 (KEEKDRASGY…PPPWTPMLPS (65 aa)) is disordered. Over residues 68-78 (GYRKRGPKPKR) the composition is skewed to basic residues.

In terms of assembly, component of a PRC1-like complex. Distinct PRC1-like core complexes are composed of a RING1 subunit (RING1B or RING1A), one of the six PCGF proteins (PCGF1-6), one PHC protein (PHC1-3) and one of the CBX proteins (CBX2, CBX4, CBX6, CBX7 or CBX8). The composition of the PRC1 complex may differ between the PRC1 complex in pluripotent embryonic stem cells containing RNF2, CBX7 and PCGF2, and the PRC1 complex in differentiating cells containing RNF2, CBX2, CBX4 and BMI1. Interacts with RING1. Interacts with RNF2/RING1B. Interacts with PCGF1, PCGF2, PCGF3, PCGF5 and PCGF6. Interacts (via chromodomain) with histone H3K9Me3 and H3K27me3. Interacts with H3K9Me2 and H4K20Me1. Interacts (via chromodomain) with single-stranded and double-stranded RNA; RNA binding seems to be required for the localization to chromatin.

The protein resides in the nucleus. Its subcellular location is the chromosome. Functionally, component of a Polycomb group (PcG) multiprotein PRC1-like complex, a complex class required to maintain the transcriptionally repressive state of many genes, including Hox genes, throughout development. PcG PRC1 complex acts via chromatin remodeling and modification of histones; it mediates monoubiquitination of histone H2A 'Lys-119', rendering chromatin heritably changed in its expressibility. Promotes histone H3 trimethylation at 'Lys-9' (H3K9me3). Binds to histone H3 trimethylated 'Lys-9' (H3K9me3) or at 'Lys-27' (H3K27me3). May possibly also bind trimethylated lysine residues in other proteins (in vitro). Binds non-coding, single-stranded and double-stranded RNA. Plays a role in the timely repression of differentiation-specific genes in pluripotent embryonic stem cells to maintain the undifferentiated state. Regulator of cellular lifespan by maintaining the repression of CDKN2A, but not by inducing telomerase activity. The protein is Chromobox protein homolog 7 (Cbx7) of Rattus norvegicus (Rat).